Reading from the N-terminus, the 149-residue chain is MKYQQLENLECGWKWKYLIKKWKDGEAITRHIDTSEADAAIAELRRIEHEPTLVLAWIEKHMSEELENKLKQAIRAKRKRHFNAEQVHTKKKSIDLDYRVWEKLSNRANELGCTLSDAIEYLLSEASRSEKASQKVTSIKEDLSKLLSS.

It belongs to the MatP family. As to quaternary structure, homodimer.

Its subcellular location is the cytoplasm. Required for spatial organization of the terminus region of the chromosome (Ter macrodomain) during the cell cycle. Prevents early segregation of duplicated Ter macrodomains during cell division. Binds specifically to matS, which is a 13 bp signature motif repeated within the Ter macrodomain. This is Macrodomain Ter protein from Vibrio parahaemolyticus serotype O3:K6 (strain RIMD 2210633).